The chain runs to 542 residues: Chaperonin GroEL (542 aa).

Residues Thr29–Pro32, Asp86–Thr90, Gly413, Asn476–Ala478, and Asp492 contribute to the ATP site. Residues Pro522–Met542 are disordered.

This sequence belongs to the chaperonin (HSP60) family. As to quaternary structure, forms a cylinder of 14 subunits composed of two heptameric rings stacked back-to-back. Interacts with the co-chaperonin GroES.

It localises to the cytoplasm. The enzyme catalyses ATP + H2O + a folded polypeptide = ADP + phosphate + an unfolded polypeptide.. Functionally, together with its co-chaperonin GroES, plays an essential role in assisting protein folding. The GroEL-GroES system forms a nano-cage that allows encapsulation of the non-native substrate proteins and provides a physical environment optimized to promote and accelerate protein folding. The chain is Chaperonin GroEL from Listeria monocytogenes serotype 4a (strain HCC23).